A 425-amino-acid polypeptide reads, in one-letter code: Serine hydroxymethyltransferase 2 (425 aa).

(6S)-5,6,7,8-tetrahydrofolate contacts are provided by residues Leu121 and 125–127 (GHL). The residue at position 230 (Lys230) is an N6-(pyridoxal phosphate)lysine.

Belongs to the SHMT family. In terms of assembly, homodimer. Pyridoxal 5'-phosphate serves as cofactor.

It is found in the cytoplasm. It catalyses the reaction (6R)-5,10-methylene-5,6,7,8-tetrahydrofolate + glycine + H2O = (6S)-5,6,7,8-tetrahydrofolate + L-serine. It functions in the pathway one-carbon metabolism; tetrahydrofolate interconversion. It participates in amino-acid biosynthesis; glycine biosynthesis; glycine from L-serine: step 1/1. In terms of biological role, catalyzes the reversible interconversion of serine and glycine with tetrahydrofolate (THF) serving as the one-carbon carrier. This reaction serves as the major source of one-carbon groups required for the biosynthesis of purines, thymidylate, methionine, and other important biomolecules. Also exhibits THF-independent aldolase activity toward beta-hydroxyamino acids, producing glycine and aldehydes, via a retro-aldol mechanism. This Mycobacterium tuberculosis (strain CDC 1551 / Oshkosh) protein is Serine hydroxymethyltransferase 2.